The chain runs to 500 residues: L-arabinose isomerase (500 aa).

Residues E306, E333, H350, and H450 each coordinate Mn(2+).

Belongs to the arabinose isomerase family. As to quaternary structure, homohexamer. It depends on Mn(2+) as a cofactor.

It carries out the reaction beta-L-arabinopyranose = L-ribulose. It participates in carbohydrate degradation; L-arabinose degradation via L-ribulose; D-xylulose 5-phosphate from L-arabinose (bacterial route): step 1/3. Functionally, catalyzes the conversion of L-arabinose to L-ribulose. In Yersinia enterocolitica serotype O:8 / biotype 1B (strain NCTC 13174 / 8081), this protein is L-arabinose isomerase.